A 540-amino-acid chain; its full sequence is Phosphatidylinositol 4-phosphate 5-kinase type-1 beta (540 aa).

A disordered region spans residues 1 to 23; it reads MSSVTENGDVTAGKPNEEKTYKK. One can recognise a PIPK domain in the interval 25-395; sequence TSSAIKGAIQ…RFLKFMNTRV (371 aa).

The protein resides in the cytoplasm. Its subcellular location is the cytosol. The protein localises to the cell membrane. It localises to the endomembrane system. The enzyme catalyses a 1,2-diacyl-sn-glycero-3-phospho-(1D-myo-inositol 4-phosphate) + ATP = a 1,2-diacyl-sn-glycero-3-phospho-(1D-myo-inositol-4,5-bisphosphate) + ADP + H(+). The catalysed reaction is 1-octadecanoyl-2-(5Z,8Z,11Z,14Z)-eicosatetraenoyl-sn-glycero-3-phospho-1D-myo-inositol 4-phosphate + ATP = 1-octadecanoyl-2-(5Z,8Z,11Z,14Z)-eicosatetraenoyl-sn-glycero-3-phospho-1D-myo-inositol 4,5-bisphosphate + ADP + H(+). It catalyses the reaction 1-octadecanoyl-2-(9Z)-octadecenoyl-sn-glycero-3-phospho-1D-myo-inositol 4-phosphate + ATP = 1-octadecanoyl-2-(9Z)-octadecenoyl-sn-glycero-3-phospho-1D-myo-inositol 4,5-bisphosphate + ADP + H(+). It carries out the reaction 1-octadecanoyl-2-(9Z)-octadecenoyl-sn-glycero-3-phospho-1D-myo-inositol + ATP = 1-octadecanoyl-2-(9Z)-octadecenoyl-sn-glycero-3-phospho-1D-myo-inositol 5-phosphate + ADP + H(+). The enzyme catalyses 1-octadecanoyl-2-(9Z,12Z)-octadecadienoyl-sn-glycero-3-phospho-1D-myo-inositol + ATP = 1-octadecanoyl-2-(9Z,12Z)-octadecadienoyl-sn-glycero-3-phospho-1D-myo-inositol 5-phosphate + ADP + H(+). The catalysed reaction is 1-octadecanoyl-2-(5Z,8Z,11Z,14Z-eicosatetraenoyl)-sn-glycero-3-phospho-(1D-myo-inositol) + ATP = 1-octadecanoyl-2-(5Z,8Z,11Z,14Z)-eicosatetraenoyl-sn-glycero-3-phospho-1D-myo-inositol 5-phosphate + ADP + H(+). It catalyses the reaction 1,2-di-(9Z,12Z)-octadecadienoyl-sn-glycero-3-phospho-1D-myo-inositol + ATP = 1,2-di(9Z,12Z)-octadecadienoyl-sn-glycero-3-phospho-1D-myo-inositol 5-phosphate + ADP + H(+). Its function is as follows. Catalyzes the phosphorylation of phosphatidylinositol 4-phosphate (PtdIns(4)P/PI4P) to form phosphatidylinositol 4,5-bisphosphate (PtdIns(4,5)P2/PIP2), a lipid second messenger that regulates several cellular processes such as signal transduction, vesicle trafficking, actin cytoskeleton dynamics, cell adhesion, and cell motility. PtdIns(4,5)P2 can directly act as a second messenger or can be utilized as a precursor to generate other second messengers: inositol 1,4,5-trisphosphate (IP3), diacylglycerol (DAG) or phosphatidylinositol-3,4,5-trisphosphate (PtdIns(3,4,5)P3/PIP3). This is Phosphatidylinositol 4-phosphate 5-kinase type-1 beta (PIP5K1B) from Gallus gallus (Chicken).